We begin with the raw amino-acid sequence, 2524 residues long: Highly reducing polyketide synthase Preu5 (2524 aa).

One can recognise a Ketosynthase family 3 (KS3) domain in the interval 5–426; that stretch reads DTPIAIIGLS…GSNSAIVIEK (422 aa). Active-site for beta-ketoacyl synthase activity residues include Cys-175, His-310, and His-350. The tract at residues 431–470 is disordered; that stretch reads DELGHETNGTNGVSVSNGVNGSNGFTNGSNGTNGHAENGN. Positions 437–464 are enriched in low complexity; sequence TNGTNGVSVSNGVNGSNGFTNGSNGTNG. The segment at 559–882 is malonyl-CoA:ACP transacylase (MAT) domain; the sequence is VFTGQGAQYA…TYLPSLVRNV (324 aa). Catalysis depends on Ser-648, which acts as the For malonyltransferase activity. Positions 950 to 1084 are N-terminal hotdog fold; the sequence is HELLGRRVVS…GQIEPEFADM (135 aa). Residues 950-1264 enclose the PKS/mFAS DH domain; it reads HELLGRRVVS…FRNIGSADEN (315 aa). A dehydratase (DH) domain region spans residues 950–1266; it reads HELLGRRVVS…NIGSADENID (317 aa). Catalysis depends on His-982, which acts as the Proton acceptor; for dehydratase activity. The tract at residues 1102 to 1264 is C-terminal hotdog fold; the sequence is ADLLEHDIEG…FRNIGSADEN (163 aa). Asp-1171 serves as the catalytic Proton donor; for dehydratase activity. Residues 1418–1611 form a methyltransferase (CMet) domain region; that stretch reads SQAVGDLADN…IPGVWDSEVQ (194 aa). The enoylreductase (ER) domain stretch occupies residues 1825–2139; the sequence is GSPDSIYFRR…SGDHLGKIVV (315 aa). The segment at 2164-2339 is ketoreductase (KR) domain; it reads GTYLVTGGTR…HTVSIALPIV (176 aa). The Carrier domain occupies 2445-2522; it reads DPLEGLTEAL…ALATDILSQR (78 aa). Ser-2482 is subject to O-(pantetheine 4'-phosphoryl)serine.

The cofactor is pantetheine 4'-phosphate.

Highly reducing polyketide synthase; part of a gene cluster that mediates the biosynthesis of a yet unidentified natural product. The sequence is that of Highly reducing polyketide synthase Preu5 from Preussia isomera (Coprophilous fungus).